Consider the following 85-residue polypeptide: Large ribosomal subunit protein bL31B (85 aa).

Belongs to the bacterial ribosomal protein bL31 family. Type B subfamily. As to quaternary structure, part of the 50S ribosomal subunit.

The sequence is that of Large ribosomal subunit protein bL31B from Aliivibrio salmonicida (strain LFI1238) (Vibrio salmonicida (strain LFI1238)).